A 451-amino-acid polypeptide reads, in one-letter code: Cytochrome c biogenesis protein CcsB (451 aa).

The next 3 membrane-spanning stretches (helical) occupy residues 30 to 50, 89 to 109, and 175 to 195; these read LRLA…GTVI, TWWF…CTFT, and IGPI…IWGA.

It belongs to the Ccs1/CcsB family. As to quaternary structure, may interact with CcsA.

Its subcellular location is the cellular thylakoid membrane. Required during biogenesis of c-type cytochromes (cytochrome c6 and cytochrome f) at the step of heme attachment. This chain is Cytochrome c biogenesis protein CcsB, found in Crocosphaera subtropica (strain ATCC 51142 / BH68) (Cyanothece sp. (strain ATCC 51142)).